The chain runs to 349 residues: Interferon regulatory factor 2 (349 aa).

The IRF tryptophan pentad repeat DNA-binding region spans 5-113 (RMRMRPWLEE…NAFRVYRMLP (109 aa)). K75 and K78 each carry N6-acetyllysine. K137 participates in a covalent cross-link: Glycyl lysine isopeptide (Lys-Gly) (interchain with G-Cter in SUMO); alternate. A Glycyl lysine isopeptide (Lys-Gly) (interchain with G-Cter in SUMO2); alternate cross-link involves residue K137. K166 is covalently cross-linked (Glycyl lysine isopeptide (Lys-Gly) (interchain with G-Cter in SUMO)). S225 is subject to Phosphoserine. A compositionally biased stretch (polar residues) spans 230–239 (YAESETTDSV). The tract at residues 230 to 253 (YAESETTDSVASDEENAEGRPHWR) is disordered. K260 is covalently cross-linked (Glycyl lysine isopeptide (Lys-Gly) (interchain with G-Cter in SUMO2)). Residue K293 forms a Glycyl lysine isopeptide (Lys-Gly) (interchain with G-Cter in SUMO) linkage. The interval 303–349 (SSWPPFTDLPLPAPVTPTPSSSRPDRETRASVIKKTSDITQARVKSC) is disordered.

This sequence belongs to the IRF family. Interacts with BRD7, IRF2BP1 and IRF2BP2. Interacts with CREBBP in growing cells; the interaction acetylates IRF2 and regulates IRF2-dependent H4 promoter activity. Post-translationally, acetylated by CBP/ p300 during cell-growth. Acetylation on Lys-75 is required for stimulation of H4 promoter activity. The major sites of sumoylation are Lys-137 and Lys-293. Sumoylation with SUMO1 increases its transcriptional repressor activity on IRF1 and diminishes its ability to activate ISRE and H4 promoter.

Its subcellular location is the nucleus. Specifically binds to the upstream regulatory region of type I IFN and IFN-inducible MHC class I genes (the interferon consensus sequence (ICS)) and represses those genes. Also acts as an activator for several genes including H4 and IL7. Constitutively binds to the ISRE promoter to activate IL7. Involved in cell cycle regulation through binding the site II (HiNF-M) promoter region of H4 and activating transcription during cell growth. Antagonizes IRF1 transcriptional activation. The sequence is that of Interferon regulatory factor 2 (Irf2) from Mus musculus (Mouse).